Consider the following 136-residue polypeptide: D-ribose pyranase (136 aa).

His20 functions as the Proton donor in the catalytic mechanism. Residues Asp28, His98, and 120 to 122 each bind substrate; that span reads YAN.

The protein belongs to the RbsD / FucU family. RbsD subfamily. Homodecamer.

The protein localises to the cytoplasm. The catalysed reaction is beta-D-ribopyranose = beta-D-ribofuranose. It participates in carbohydrate metabolism; D-ribose degradation; D-ribose 5-phosphate from beta-D-ribopyranose: step 1/2. Functionally, catalyzes the interconversion of beta-pyran and beta-furan forms of D-ribose. The protein is D-ribose pyranase of Geobacillus kaustophilus (strain HTA426).